Here is a 3088-residue protein sequence, read N- to C-terminus: Protein prune homolog 2 (3088 aa).

At Met1 the chain carries N-acetylmethionine. Residues 109–111 (GSS) carry the DHH motif motif. Disordered stretches follow at residues 433–468 (IRSS…GLDS), 490–628 (HFDL…EPAS), 673–759 (SSEQ…QGTN), 771–795 (SGRS…AAVA), 846–909 (SELL…PKTR), 952–1080 (SNLG…SSYD), 1192–1211 (SDEH…NEKS), 1231–1371 (SFML…LVAS), 1413–1452 (RDVQ…GMNF), 1472–1491 (LEPE…SLDF), 1515–1585 (VKGS…QESE), 1632–1698 (DSFS…EESI), 1741–1768 (LDSS…DPWT), 1782–1813 (VEKE…KNED), 2089–2114 (ILTH…SEAK), 2173–2215 (YQAD…PDMA), 2240–2260 (QEPT…PESQ), 2492–2542 (SDLP…KNED), 2589–2667 (TQLA…SELG), 2687–2710 (ALEE…AGPD), 2814–2833 (QSEG…EIDI), and 2841–2875 (PDEA…AEEE). Over residues 503-512 (SGQSQQSSHS) the composition is skewed to low complexity. Basic and acidic residues predominate over residues 562–582 (SLVEHDEEFVQRQDSPRDNSE). Composition is skewed to polar residues over residues 613–625 (MNSL…STEE) and 673–684 (SSEQESVFQSPE). Basic and acidic residues predominate over residues 685-699 (SWKEHKPSSIDRRAS). Positions 750 to 759 (LPNTSPQGTN) are enriched in polar residues. Residues 846–857 (SELLDNSPSEIN) are compositionally biased toward polar residues. Residues 865–876 (WGKKNNDSRDHI) show a composition bias toward basic and acidic residues. Polar residues predominate over residues 881–894 (NPSSDLDHTWTNSK). Residues 895–909 (PPKEDQNGLVDPKTR) show a composition bias toward basic and acidic residues. The segment covering 964–977 (DTNYSTSDSYTSPT) has biased composition (low complexity). Residues 980-1000 (GDEKETEHKPFAKEEGFESKD) are compositionally biased toward basic and acidic residues. Composition is skewed to polar residues over residues 1001-1027 (GNST…SSGP) and 1037-1048 (HTDNSSEINTTH). Basic and acidic residues-rich tracts occupy residues 1049 to 1062 (NLDE…HTDG), 1192 to 1208 (SDEH…HTLN), 1282 to 1293 (HLDKQDTERETL), 1314 to 1339 (DPWK…RGHL), and 1425 to 1434 (QPKDTHEKHL). The segment covering 1436–1450 (SQRNSGETTETSDGM) has biased composition (polar residues). The span at 1537–1585 (SSEYTHSSASSPELNDSSVALSSWGQQPSSGYQEENQGNWSEQNHQESE) shows a compositional bias: polar residues. Over residues 1687-1698 (SDDDSVGGEESI) the composition is skewed to acidic residues. Over residues 1752 to 1768 (KSNPFCDNQQSSPDPWT) the composition is skewed to polar residues. Basic and acidic residues-rich tracts occupy residues 2516 to 2542 (EKTI…KNED) and 2604 to 2622 (NERK…DTRS). Residues 2623–2632 (SFESPAQDQS) show a composition bias toward polar residues. Positions 2823–2833 (DNLDSPDEIDI) are enriched in acidic residues. One can recognise a CRAL-TRIO domain in the interval 2895 to 3056 (DMKVIEPYRR…SIIKLDEELR (162 aa)).

The protein belongs to the PPase class C family. Prune subfamily. A high level of expression seen in the nervous system (brain, cerebellum and spinal cord) as well as adrenal gland. Expressed at high levels in noneuroblastoma, rhabdomyosarcoma, melanoma and some osteosarcoma cell lines, whereas at only low levels in cancer cell lines of liver, breast, thyroid and colon. Expression is significantly higher in favorable tumors than aggressive ones.

The protein localises to the cytoplasm. May play an important role in regulating differentiation, survival and aggressiveness of the tumor cells. The sequence is that of Protein prune homolog 2 (PRUNE2) from Homo sapiens (Human).